We begin with the raw amino-acid sequence, 150 residues long: Large ribosomal subunit protein bL9 (150 aa).

Belongs to the bacterial ribosomal protein bL9 family.

Its function is as follows. Binds to the 23S rRNA. In Paraburkholderia phymatum (strain DSM 17167 / CIP 108236 / LMG 21445 / STM815) (Burkholderia phymatum), this protein is Large ribosomal subunit protein bL9.